Reading from the N-terminus, the 427-residue chain is Putative ABC transporter substrate-binding protein YesO (427 aa).

This sequence belongs to the bacterial solute-binding protein 1 family.

May play a role in the degradation of type I rhamnogalacturonan derived from plant cell walls. The sequence is that of Putative ABC transporter substrate-binding protein YesO (yesO) from Bacillus subtilis (strain 168).